The chain runs to 129 residues: NADH-quinone oxidoreductase subunit A (129 aa).

3 helical membrane-spanning segments follow: residues 14–34, 67–87, and 97–117; these read LAIHVALSAGIVAAIIGVAAV, FLIAALFVIFDMEAAILFAWA, and GLIEAAIFIGVLLLALVYLWI.

The protein belongs to the complex I subunit 3 family. In terms of assembly, NDH-1 is composed of 14 different subunits. Subunits NuoA, H, J, K, L, M, N constitute the membrane sector of the complex.

The protein localises to the cell inner membrane. It catalyses the reaction a quinone + NADH + 5 H(+)(in) = a quinol + NAD(+) + 4 H(+)(out). Functionally, NDH-1 shuttles electrons from NADH, via FMN and iron-sulfur (Fe-S) centers, to quinones in the respiratory chain. The immediate electron acceptor for the enzyme in this species is believed to be ubiquinone. Couples the redox reaction to proton translocation (for every two electrons transferred, four hydrogen ions are translocated across the cytoplasmic membrane), and thus conserves the redox energy in a proton gradient. The polypeptide is NADH-quinone oxidoreductase subunit A (Rhodopseudomonas palustris (strain BisB18)).